The chain runs to 295 residues: Biliverdin reductase A (295 aa).

Residues 1–2 (MS) constitute a propeptide that is removed on maturation. NAD(+)-binding positions include 18–19 (RA), 76–79 (SSSH), and tyrosine 97. Position 154 is a phosphoserine (serine 154). Serine 167 serves as a coordination point for NAD(+). Threonine 173 carries the post-translational modification Phosphothreonine. A phosphoserine mark is found at serine 177 and serine 229. N6-acetyllysine occurs at positions 247 and 252. Residues histidine 279, cysteine 280, cysteine 291, and histidine 292 each contribute to the Zn(2+) site.

Belongs to the Gfo/Idh/MocA family. Biliverdin reductase subfamily. As to quaternary structure, monomer. Requires Zn(2+) as cofactor.

Its subcellular location is the cytoplasm. The protein resides in the cytosol. The enzyme catalyses (4Z,15Z)-bilirubin IXalpha + NAD(+) = biliverdin IXalpha + NADH + H(+). The catalysed reaction is (4Z,15Z)-bilirubin IXalpha + NADP(+) = biliverdin IXalpha + NADPH + H(+). The protein operates within porphyrin-containing compound metabolism; protoheme degradation. Its function is as follows. Reduces the gamma-methene bridge of the open tetrapyrrole, biliverdin IXalpha, to bilirubin with the concomitant oxidation of a NADH or NADPH cofactor. Does not reduce bilirubin IXbeta. Uses the reactants NADH or NADPH depending on the pH; NADH is used at the acidic pH range (6-6.9) and NADPH at the alkaline range (8.5-8.7). NADPH, however, is the probable reactant in biological systems. The sequence is that of Biliverdin reductase A from Mus musculus (Mouse).